Reading from the N-terminus, the 383-residue chain is uncharacterized protein (383 aa).

Disordered regions lie at residues 27–66 (ENNN…NKKP) and 242–281 (LITT…ITRR). Low complexity-rich tracts occupy residues 28-63 (NNNT…NNNN) and 242-275 (LITT…KSSS).

This is an uncharacterized protein from Dictyostelium discoideum (Social amoeba).